A 495-amino-acid polypeptide reads, in one-letter code: Siroheme synthase 2 (495 aa).

The segment at 1–205 is precorrin-2 dehydrogenase /sirohydrochlorin ferrochelatase; it reads MDHYPIFLNL…GREREAEQAM (205 aa). NAD(+) contacts are provided by residues 22–23 and 43–44; these read ET and PD. S130 carries the post-translational modification Phosphoserine. The uroporphyrinogen-III C-methyltransferase stretch occupies residues 220-495; sequence GEVYLVGAGP…HPAPADTEQA (276 aa). P229 serves as a coordination point for S-adenosyl-L-methionine. The active-site Proton acceptor is D252. Catalysis depends on K274, which acts as the Proton donor. S-adenosyl-L-methionine is bound by residues 305–307, I310, 335–336, M387, and A416; these read GGD and TA. A disordered region spans residues 471-495; that stretch reads FPEHGCLRGEPRPTRHPAPADTEQA.

The protein in the N-terminal section; belongs to the precorrin-2 dehydrogenase / sirohydrochlorin ferrochelatase family. It in the C-terminal section; belongs to the precorrin methyltransferase family.

The enzyme catalyses uroporphyrinogen III + 2 S-adenosyl-L-methionine = precorrin-2 + 2 S-adenosyl-L-homocysteine + H(+). It catalyses the reaction precorrin-2 + NAD(+) = sirohydrochlorin + NADH + 2 H(+). It carries out the reaction siroheme + 2 H(+) = sirohydrochlorin + Fe(2+). The protein operates within cofactor biosynthesis; adenosylcobalamin biosynthesis; precorrin-2 from uroporphyrinogen III: step 1/1. It participates in cofactor biosynthesis; adenosylcobalamin biosynthesis; sirohydrochlorin from precorrin-2: step 1/1. It functions in the pathway porphyrin-containing compound metabolism; siroheme biosynthesis; precorrin-2 from uroporphyrinogen III: step 1/1. Its pathway is porphyrin-containing compound metabolism; siroheme biosynthesis; siroheme from sirohydrochlorin: step 1/1. The protein operates within porphyrin-containing compound metabolism; siroheme biosynthesis; sirohydrochlorin from precorrin-2: step 1/1. Functionally, multifunctional enzyme that catalyzes the SAM-dependent methylations of uroporphyrinogen III at position C-2 and C-7 to form precorrin-2 via precorrin-1. Then it catalyzes the NAD-dependent ring dehydrogenation of precorrin-2 to yield sirohydrochlorin. Finally, it catalyzes the ferrochelation of sirohydrochlorin to yield siroheme. The polypeptide is Siroheme synthase 2 (Halorhodospira halophila (strain DSM 244 / SL1) (Ectothiorhodospira halophila (strain DSM 244 / SL1))).